Consider the following 364-residue polypeptide: Histidinol-phosphate aminotransferase (364 aa).

The residue at position 225 (Lys225) is an N6-(pyridoxal phosphate)lysine.

The protein belongs to the class-II pyridoxal-phosphate-dependent aminotransferase family. Histidinol-phosphate aminotransferase subfamily. As to quaternary structure, homodimer. Requires pyridoxal 5'-phosphate as cofactor.

The catalysed reaction is L-histidinol phosphate + 2-oxoglutarate = 3-(imidazol-4-yl)-2-oxopropyl phosphate + L-glutamate. The protein operates within amino-acid biosynthesis; L-histidine biosynthesis; L-histidine from 5-phospho-alpha-D-ribose 1-diphosphate: step 7/9. This Sulfurovum sp. (strain NBC37-1) protein is Histidinol-phosphate aminotransferase.